Here is a 554-residue protein sequence, read N- to C-terminus: Membrane protein insertase YidC (554 aa).

5 helical membrane-spanning segments follow: residues 7-24, 362-382, 436-456, 475-495, and 510-530; these read VLWV…DNWQ, FVGN…AVFF, LPVV…LASV, PFFI…SLNP, and PIAF…YYVV.

It belongs to the OXA1/ALB3/YidC family. Type 1 subfamily. In terms of assembly, interacts with the Sec translocase complex via SecD. Specifically interacts with transmembrane segments of nascent integral membrane proteins during membrane integration.

It is found in the cell inner membrane. Functionally, required for the insertion and/or proper folding and/or complex formation of integral membrane proteins into the membrane. Involved in integration of membrane proteins that insert both dependently and independently of the Sec translocase complex, as well as at least some lipoproteins. Aids folding of multispanning membrane proteins. In Burkholderia ambifaria (strain MC40-6), this protein is Membrane protein insertase YidC.